The sequence spans 110 residues: Large ribosomal subunit protein uL22 (110 aa).

It belongs to the universal ribosomal protein uL22 family. Part of the 50S ribosomal subunit.

In terms of biological role, this protein binds specifically to 23S rRNA; its binding is stimulated by other ribosomal proteins, e.g. L4, L17, and L20. It is important during the early stages of 50S assembly. It makes multiple contacts with different domains of the 23S rRNA in the assembled 50S subunit and ribosome. The globular domain of the protein is located near the polypeptide exit tunnel on the outside of the subunit, while an extended beta-hairpin is found that lines the wall of the exit tunnel in the center of the 70S ribosome. The sequence is that of Large ribosomal subunit protein uL22 from Shewanella amazonensis (strain ATCC BAA-1098 / SB2B).